Reading from the N-terminus, the 366-residue chain is Cell division protein FtsZ 1 (366 aa).

GTP is bound by residues 45 to 49 (GAGCN), 132 to 134 (GTG), glutamate 163, arginine 167, and aspartate 210. The span at 344 to 354 (PEEETPLETPE) shows a compositional bias: acidic residues. Residues 344-366 (PEEETPLETPEESPSIEISIPEL) are disordered. Residues 355–366 (ESPSIEISIPEL) are compositionally biased toward low complexity.

The protein belongs to the FtsZ family. Homodimer. Polymerizes to form a dynamic ring structure in a strictly GTP-dependent manner. Interacts directly with several other division proteins.

It is found in the cytoplasm. Its function is as follows. Essential cell division protein that forms a contractile ring structure (Z ring) at the future cell division site. The regulation of the ring assembly controls the timing and the location of cell division. One of the functions of the FtsZ ring is to recruit other cell division proteins to the septum to produce a new cell wall between the dividing cells. Binds GTP and shows GTPase activity. The protein is Cell division protein FtsZ 1 of Pyrococcus woesei.